The following is a 414-amino-acid chain: Serine hydroxymethyltransferase (414 aa).

Residues Leu-121 and 125 to 127 each bind (6S)-5,6,7,8-tetrahydrofolate; that span reads GHL. At Lys-229 the chain carries N6-(pyridoxal phosphate)lysine.

Belongs to the SHMT family. As to quaternary structure, homodimer. Pyridoxal 5'-phosphate is required as a cofactor.

The protein localises to the cytoplasm. It catalyses the reaction (6R)-5,10-methylene-5,6,7,8-tetrahydrofolate + glycine + H2O = (6S)-5,6,7,8-tetrahydrofolate + L-serine. Its pathway is one-carbon metabolism; tetrahydrofolate interconversion. It functions in the pathway amino-acid biosynthesis; glycine biosynthesis; glycine from L-serine: step 1/1. Functionally, catalyzes the reversible interconversion of serine and glycine with tetrahydrofolate (THF) serving as the one-carbon carrier. This reaction serves as the major source of one-carbon groups required for the biosynthesis of purines, thymidylate, methionine, and other important biomolecules. Also exhibits THF-independent aldolase activity toward beta-hydroxyamino acids, producing glycine and aldehydes, via a retro-aldol mechanism. The polypeptide is Serine hydroxymethyltransferase (Polynucleobacter necessarius subsp. necessarius (strain STIR1)).